The chain runs to 482 residues: tRNA sulfurtransferase (482 aa).

In terms of domain architecture, THUMP spans 61–165; the sequence is LAIRDALTRI…DDRLLLIKGR (105 aa). Residues 183–184, Lys265, Gly287, and Gln296 contribute to the ATP site; that span reads LI. A disulfide bridge links Cys344 with Cys456. In terms of domain architecture, Rhodanese spans 404–482; it reads FGPNDVILDI…GFNNVKVYRP (79 aa). The active-site Cysteine persulfide intermediate is Cys456.

Belongs to the ThiI family.

The protein resides in the cytoplasm. It carries out the reaction [ThiI sulfur-carrier protein]-S-sulfanyl-L-cysteine + a uridine in tRNA + 2 reduced [2Fe-2S]-[ferredoxin] + ATP + H(+) = [ThiI sulfur-carrier protein]-L-cysteine + a 4-thiouridine in tRNA + 2 oxidized [2Fe-2S]-[ferredoxin] + AMP + diphosphate. The catalysed reaction is [ThiS sulfur-carrier protein]-C-terminal Gly-Gly-AMP + S-sulfanyl-L-cysteinyl-[cysteine desulfurase] + AH2 = [ThiS sulfur-carrier protein]-C-terminal-Gly-aminoethanethioate + L-cysteinyl-[cysteine desulfurase] + A + AMP + 2 H(+). The protein operates within cofactor biosynthesis; thiamine diphosphate biosynthesis. Its function is as follows. Catalyzes the ATP-dependent transfer of a sulfur to tRNA to produce 4-thiouridine in position 8 of tRNAs, which functions as a near-UV photosensor. Also catalyzes the transfer of sulfur to the sulfur carrier protein ThiS, forming ThiS-thiocarboxylate. This is a step in the synthesis of thiazole, in the thiamine biosynthesis pathway. The sulfur is donated as persulfide by IscS. This Escherichia coli O127:H6 (strain E2348/69 / EPEC) protein is tRNA sulfurtransferase.